We begin with the raw amino-acid sequence, 648 residues long: Leucine aminopeptidase 2 (648 aa).

Residues 143-145 and 269-274 contribute to the a peptide site; these read QCQ and PYGGME. His-298 is a binding site for Zn(2+). Glu-299 acts as the Proton acceptor in catalysis. Zn(2+) contacts are provided by His-302 and Glu-321. The active-site Proton donor is Tyr-408.

This sequence belongs to the peptidase M1 family. The cofactor is Zn(2+).

The protein localises to the cytoplasm. It localises to the nucleus. The catalysed reaction is an epoxide + H2O = an ethanediol. Aminopeptidase that preferentially cleaves di- and tripeptides. Also has low epoxide hydrolase activity (in vitro). Can hydrolyze the epoxide leukotriene LTA(4) but it forms preferentially 5,6-dihydroxy-7,9,11,14-eicosatetraenoic acid rather than the cytokine leukotriene B(4) as the product compared to the homologous mammalian enzyme (in vitro). This Lodderomyces elongisporus (strain ATCC 11503 / CBS 2605 / JCM 1781 / NBRC 1676 / NRRL YB-4239) (Yeast) protein is Leucine aminopeptidase 2.